Here is a 363-residue protein sequence, read N- to C-terminus: Phosphoserine aminotransferase (363 aa).

Position 42 (Arg42) interacts with L-glutamate. Pyridoxal 5'-phosphate contacts are provided by residues 76-77 (GR), Trp102, Thr156, Asp175, and Gln198. Lys199 carries the post-translational modification N6-(pyridoxal phosphate)lysine. 240-241 (NT) is a pyridoxal 5'-phosphate binding site.

It belongs to the class-V pyridoxal-phosphate-dependent aminotransferase family. SerC subfamily. As to quaternary structure, homodimer. The cofactor is pyridoxal 5'-phosphate.

The protein resides in the cytoplasm. It catalyses the reaction O-phospho-L-serine + 2-oxoglutarate = 3-phosphooxypyruvate + L-glutamate. The catalysed reaction is 4-(phosphooxy)-L-threonine + 2-oxoglutarate = (R)-3-hydroxy-2-oxo-4-phosphooxybutanoate + L-glutamate. It functions in the pathway amino-acid biosynthesis; L-serine biosynthesis; L-serine from 3-phospho-D-glycerate: step 2/3. The protein operates within cofactor biosynthesis; pyridoxine 5'-phosphate biosynthesis; pyridoxine 5'-phosphate from D-erythrose 4-phosphate: step 3/5. Catalyzes the reversible conversion of 3-phosphohydroxypyruvate to phosphoserine and of 3-hydroxy-2-oxo-4-phosphonooxybutanoate to phosphohydroxythreonine. The chain is Phosphoserine aminotransferase from Shewanella sp. (strain MR-4).